Here is a 737-residue protein sequence, read N- to C-terminus: Serine/threonine-protein kinase dst1 (737 aa).

A Protein kinase domain is found at 29-281 (YHIQERLGKG…AKELLNHEFI (253 aa)). Residues 35–43 (LGKGSFGQV) and Lys-58 each bind ATP. The active-site Proton acceptor is the Asp-149. Disordered stretches follow at residues 305-356 (SMFE…SNNY), 372-475 (KDDA…TTDQ), 491-559 (KPIT…ISNN), and 575-631 (NNNI…ESLS). 4 stretches are compositionally biased toward low complexity: residues 334–345 (NNNTVTNYSTVI), 401–410 (SSCSSSSSSS), 425–444 (PITN…NKIP), and 454–473 (ATTT…STTT). Residues 491-503 (KPITSSNSTSVTP) are compositionally biased toward polar residues. Residues 510-525 (SNNTTTTSNINTPIKP) are compositionally biased toward low complexity. Polar residues-rich tracts occupy residues 529–554 (LKKS…TPLK) and 585–596 (SPTTGQKIIKTN). The segment covering 597–615 (SGGVLKSSGGLSSKRSPSS) has biased composition (low complexity).

It belongs to the protein kinase superfamily. STE Ser/Thr protein kinase family. STE20 subfamily. It depends on Mg(2+) as a cofactor.

The catalysed reaction is L-seryl-[protein] + ATP = O-phospho-L-seryl-[protein] + ADP + H(+). The enzyme catalyses L-threonyl-[protein] + ATP = O-phospho-L-threonyl-[protein] + ADP + H(+). In Dictyostelium discoideum (Social amoeba), this protein is Serine/threonine-protein kinase dst1.